The following is a 197-amino-acid chain: FMN-dependent NADH:quinone oxidoreductase 1 (197 aa).

FMN is bound by residues S10, 16 to 18 (SQS), 93 to 96 (MYNF), and 137 to 140 (TRGG).

Belongs to the azoreductase type 1 family. As to quaternary structure, homodimer. Requires FMN as cofactor.

The catalysed reaction is 2 a quinone + NADH + H(+) = 2 a 1,4-benzosemiquinone + NAD(+). It catalyses the reaction N,N-dimethyl-1,4-phenylenediamine + anthranilate + 2 NAD(+) = 2-(4-dimethylaminophenyl)diazenylbenzoate + 2 NADH + 2 H(+). Quinone reductase that provides resistance to thiol-specific stress caused by electrophilic quinones. Its function is as follows. Also exhibits azoreductase activity. Catalyzes the reductive cleavage of the azo bond in aromatic azo compounds to the corresponding amines. The chain is FMN-dependent NADH:quinone oxidoreductase 1 from Photobacterium profundum (strain SS9).